Here is a 474-residue protein sequence, read N- to C-terminus: PTS system sucrose-specific EIIBC component (474 aa).

A PTS EIIB type-1 domain is found at 4–87 (SQIAQQVIDK…SKLLGIGDMT (84 aa)). The active-site Phosphocysteine intermediate; for EIIB activity is Cys-26. Residues 107 to 474 (KGLADIFVPI…LGKRAQLKAE (368 aa)) form the PTS EIIC type-1 domain. 10 helical membrane passes run 109-129 (LADIFVPIIPAIVAGGLLMGI), 158-178 (FINTIANAPFVFLPVLLGFSA), 182-202 (FGGNPFLGAALGMLLVHPALS), 229-249 (VGYQGTVIPVLVASWVLATLE), 264-284 (ITPLFALFITGLLAFTVIGPI), 303-323 (LGFVGGAIFGTLYAPIVITGM), 345-365 (FIFPIAAMSNIAQGAACLGAA), 376-396 (IAVPSGISALLGITEPAMFGV), 403-423 (PFISAMIGAGISSAVIALFNV), and 444-464 (LAMYCVGMLISASIAFTLTVI).

The protein localises to the cell inner membrane. The enzyme catalyses N(pros)-phospho-L-histidyl-[protein](out) + sucrose = sucrose 6(G)-phosphate(in) + L-histidyl-[protein]. The phosphoenolpyruvate-dependent sugar phosphotransferase system (sugar PTS), a major carbohydrate active transport system, catalyzes the phosphorylation of incoming sugar substrates concomitantly with their translocation across the cell membrane. This system is involved in sucrose transport. This is PTS system sucrose-specific EIIBC component (scrA) from Pasteurella multocida (strain Pm70).